A 453-amino-acid chain; its full sequence is Allantoinase (453 aa).

Zn(2+) contacts are provided by His-59, His-61, Lys-146, His-186, His-242, and Asp-315. An N6-carboxylysine modification is found at Lys-146.

The protein belongs to the metallo-dependent hydrolases superfamily. Allantoinase family. In terms of assembly, homotetramer. The cofactor is Zn(2+). Post-translationally, carboxylation allows a single lysine to coordinate two zinc ions.

It carries out the reaction (S)-allantoin + H2O = allantoate + H(+). It functions in the pathway nitrogen metabolism; (S)-allantoin degradation; allantoate from (S)-allantoin: step 1/1. In terms of biological role, catalyzes the conversion of allantoin (5-ureidohydantoin) to allantoic acid by hydrolytic cleavage of the five-member hydantoin ring. The chain is Allantoinase from Escherichia coli (strain K12 / MC4100 / BW2952).